The primary structure comprises 293 residues: Cytochrome c biogenesis protein CcsA (293 aa).

8 consecutive transmembrane segments (helical) span residues 12-32 (INIL…AKLT), 39-59 (VFSL…GMLL), 78-98 (LFLS…LSII), 99-119 (GAIG…ILPP), 142-162 (VMIF…IYVI), 216-236 (FISL…VWAN), 250-267 (TWAL…HIRI), and 273-293 (KIYA…VTWE).

Belongs to the CcmF/CycK/Ccl1/NrfE/CcsA family. May interact with Ccs1.

The protein resides in the plastid. The protein localises to the chloroplast thylakoid membrane. Functionally, required during biogenesis of c-type cytochromes (cytochrome c6 and cytochrome f) at the step of heme attachment. This Cyanidium caldarium (Red alga) protein is Cytochrome c biogenesis protein CcsA.